The following is an 84-amino-acid chain: Cell division topological specificity factor (84 aa).

It belongs to the MinE family.

Prevents the cell division inhibition by proteins MinC and MinD at internal division sites while permitting inhibition at polar sites. This ensures cell division at the proper site by restricting the formation of a division septum at the midpoint of the long axis of the cell. This Pseudomonas syringae pv. tomato (strain ATCC BAA-871 / DC3000) protein is Cell division topological specificity factor.